The primary structure comprises 49 residues: uncharacterized protein (49 aa).

The chain crosses the membrane as a helical span at residues 5 to 27 (ILEILSAFIRILFKLLYCWALFF).

The protein localises to the membrane. This is an uncharacterized protein from Saccharomyces cerevisiae (strain ATCC 204508 / S288c) (Baker's yeast).